The primary structure comprises 376 residues: Zinc finger CCCH domain-containing protein C337.12 (376 aa).

Residues 2–25 (NEQQLLENIASLAGAINQYKNEKE) adopt a coiled-coil conformation. The tract at residues 60–95 (SKSTAASPPYVIPSTSSNADDANKEPEKQSTSDYVS) is disordered. The segment covering 80 to 89 (DANKEPEKQS) has biased composition (basic and acidic residues). The stretch at 105–140 (KKNILEHDLQARKANLESYRAKLEKEYKTLAENKIQ) forms a coiled coil. 4 consecutive C3H1-type zinc fingers follow at residues 202–228 (SPSA…FVHE), 229–256 (PTRK…HELD), 257–283 (PRRI…HIHY), and 284–312 (SENA…HILQ). The interval 347-376 (SKTAGSINPEDSGSEIGSNSLESNLDFISV) is disordered. A compositionally biased stretch (polar residues) spans 349 to 369 (TAGSINPEDSGSEIGSNSLES).

The protein localises to the nucleus. The polypeptide is Zinc finger CCCH domain-containing protein C337.12 (Schizosaccharomyces pombe (strain 972 / ATCC 24843) (Fission yeast)).